We begin with the raw amino-acid sequence, 187 residues long: Adenylate kinase (187 aa).

Residue 10–15 (GSGKGT) participates in ATP binding. Residues 30-59 (STGDLLRAEVAAGSPLGLKAKEVMARGDLV) form an NMP region. AMP is bound by residues Thr31, Arg36, 57–59 (DLV), 85–88 (GYPR), and Gln92. The tract at residues 126–136 (GRAKAEGREDD) is LID. Arg127 is an ATP binding site. Residues Arg133 and Arg144 each contribute to the AMP site. Residue Gly172 coordinates ATP.

Belongs to the adenylate kinase family. Monomer.

The protein localises to the cytoplasm. The enzyme catalyses AMP + ATP = 2 ADP. It participates in purine metabolism; AMP biosynthesis via salvage pathway; AMP from ADP: step 1/1. Functionally, catalyzes the reversible transfer of the terminal phosphate group between ATP and AMP. Plays an important role in cellular energy homeostasis and in adenine nucleotide metabolism. In Xanthomonas axonopodis pv. citri (strain 306), this protein is Adenylate kinase.